Reading from the N-terminus, the 256-residue chain is Zinc import ATP-binding protein ZnuC 1 (256 aa).

The ABC transporter domain maps to 5–220 (LTLQDVCVVF…PKYIALFGQQ (216 aa)). 37-44 (GPNGAGKS) is an ATP binding site. The tract at residues 232–256 (HHHNHDLSGEPSDGSCCSKNKKAHQ) is disordered.

It belongs to the ABC transporter superfamily. Zinc importer (TC 3.A.1.15.5) family. In terms of assembly, the complex is composed of two ATP-binding proteins (ZnuC), two transmembrane proteins (ZnuB) and a solute-binding protein (ZnuA).

It is found in the cell inner membrane. It catalyses the reaction Zn(2+)(out) + ATP(in) + H2O(in) = Zn(2+)(in) + ADP(in) + phosphate(in) + H(+)(in). In terms of biological role, part of the ABC transporter complex ZnuABC involved in zinc import. Responsible for energy coupling to the transport system. The chain is Zinc import ATP-binding protein ZnuC 1 from Aliivibrio fischeri (strain ATCC 700601 / ES114) (Vibrio fischeri).